A 239-amino-acid chain; its full sequence is Caffeoyl-CoA O-methyltransferase 1 (239 aa).

K13 serves as a coordination point for substrate. Residues T55, E77, 79–80 (GV), S85, D103, and A132 contribute to the S-adenosyl-L-methionine site. D155 contacts substrate. D155 is a binding site for a divalent metal cation. D157 is a binding site for S-adenosyl-L-methionine. Residues D181 and N182 each coordinate a divalent metal cation. Substrate is bound at residue N186.

This sequence belongs to the class I-like SAM-binding methyltransferase superfamily. Cation-dependent O-methyltransferase family. CCoAMT subfamily. In terms of assembly, monomer. It depends on Mg(2+) as a cofactor. In terms of tissue distribution, mostly expressed in the bottom and middle parts of the stems.

The enzyme catalyses (E)-caffeoyl-CoA + S-adenosyl-L-methionine = (E)-feruloyl-CoA + S-adenosyl-L-homocysteine + H(+). It participates in aromatic compound metabolism; phenylpropanoid biosynthesis. Functionally, methylates caffeoyl-CoA to feruloyl-CoA and 5-hydroxyferuloyl-CoA to sinapoyl-CoA. Plays a role in the synthesis of feruloylated polysaccharides. Involved in the reinforcement of the plant cell wall. Also involved in the responding to wounding or pathogen challenge by the increased formation of cell wall-bound ferulic acid polymers. In Nicotiana tabacum (Common tobacco), this protein is Caffeoyl-CoA O-methyltransferase 1 (CCOAOMT1).